Reading from the N-terminus, the 462-residue chain is Glycine--tRNA ligase (462 aa).

Residues arginine 98 and glutamate 174 each contribute to the substrate site. ATP-binding positions include arginine 206 to glutamate 208, phenylalanine 216 to phenylalanine 221, glutamate 290 to leucine 291, and glycine 334 to arginine 337. Residue phenylalanine 221–glutamate 225 coordinates substrate. Residue glutamate 330–glycine 334 participates in substrate binding.

The protein belongs to the class-II aminoacyl-tRNA synthetase family. In terms of assembly, homodimer.

It is found in the cytoplasm. It catalyses the reaction tRNA(Gly) + glycine + ATP = glycyl-tRNA(Gly) + AMP + diphosphate. Its function is as follows. Catalyzes the attachment of glycine to tRNA(Gly). The chain is Glycine--tRNA ligase from Lachnoclostridium phytofermentans (strain ATCC 700394 / DSM 18823 / ISDg) (Clostridium phytofermentans).